Reading from the N-terminus, the 61-residue chain is Large ribosomal subunit protein uL30 (61 aa).

This sequence belongs to the universal ribosomal protein uL30 family. Part of the 50S ribosomal subunit.

The chain is Large ribosomal subunit protein uL30 from Chlorobium limicola (strain DSM 245 / NBRC 103803 / 6330).